Here is a 724-residue protein sequence, read N- to C-terminus: Acyl-coenzyme A oxidase 2 (724 aa).

Positions 1–48 are disordered; the sequence is MAMLSQPNDGHDHPEKKDPDTTPKQVAGVISSQDPPHPAKDVAEERAR. Composition is skewed to basic and acidic residues over residues 9–21 and 37–48; these read DGHD…DPDT and HPAKDVAEERAR.

It belongs to the acyl-CoA oxidase family. FAD is required as a cofactor.

It is found in the peroxisome. It carries out the reaction a 2,3-saturated acyl-CoA + O2 = a (2E)-enoyl-CoA + H2O2. It functions in the pathway lipid metabolism; peroxisomal fatty acid beta-oxidation. The chain is Acyl-coenzyme A oxidase 2 (POX2) from Candida tropicalis (Yeast).